Reading from the N-terminus, the 95-residue chain is Beta-defensin 132 (95 aa).

A signal peptide spans 1 to 22; sequence MKFLLLVLAALGFLTQVIPASG. Intrachain disulfides connect Cys-27–Cys-55, Cys-35–Cys-49, and Cys-39–Cys-56. Residues 72-95 form a disordered region; the sequence is GNHWPSRSRNTQRKNKKQQTTVTP.

This sequence belongs to the beta-defensin family.

It is found in the secreted. Its function is as follows. Has antibacterial activity. The protein is Beta-defensin 132 (DEFB132) of Macaca fascicularis (Crab-eating macaque).